We begin with the raw amino-acid sequence, 116 residues long: UPF0654 protein C869.09 (116 aa).

Residues 32 to 116 are disordered; that stretch reads LKEHGSESHY…LLEEVDDESK (85 aa). Over residues 39-48 the composition is skewed to polar residues; it reads SHYTTGTTRG. The segment covering 49-64 has biased composition (basic and acidic residues); sequence QKADADDAGELREEGF.

This sequence belongs to the UPF0654 (con-6) family.

It localises to the cytoplasm. The protein localises to the nucleus. In Schizosaccharomyces pombe (strain 972 / ATCC 24843) (Fission yeast), this protein is UPF0654 protein C869.09.